The chain runs to 493 residues: Zinc finger CCCH domain-containing protein 34 (493 aa).

C3H1-type zinc fingers lie at residues 14–43 (RRCNTDCVYFLASPFTCTKGSKCEYRHADG), 45–71 (RFNRRNCWYWFKGNCVNPSCTFRHPPL), and 91–118 (VKAANPCYFYYNSHCSKGDNCPYLHEPL). Residues 397–477 (MGECPQPANH…SFSDDFEGPK (81 aa)) form a disordered region. Over residues 409–420 (FRGRRKKNRGKQ) the composition is skewed to basic residues. Positions 452 to 468 (SNSSFSHSTACTPNVRS) are enriched in polar residues.

This is Zinc finger CCCH domain-containing protein 34 from Oryza sativa subsp. japonica (Rice).